Reading from the N-terminus, the 1168-residue chain is MLEGRILAVSSQTKAVSGIPGAPKRVSFAKIREPLEVPGLLDLQTDSFEWLIGAQSWRERAAARGDSAISGGLEDILAELSPIEDFSGSMSLSFSDPRFDEVKASTDECKDKDMTYAAPLFVTAEFINNNTGEIKSQTVFMGDFPMMTDKGTFIINGTERVVVSQLVRSPGVYFDHSVDKGTEKDLHSVKVIPGRGAWLEFDVDKRDTVGVRIDRKRRQPVTVLLKALGWTTEQIAERFGFSEILMATLEKDNTAGTDEALLDIYRKLRPGEPPTKESAQTLLENLFFKDKRYDLARVGRYKINKKLGLNTGQPIVASTLTEEDIVATIEYLVRLHAGDTEMTAPGGVAVPVEVDDIDHFGNRRLRTVGELIQNQIRVGLSRMERVVRERMTTQDVEAITPQTLINIRPVVAAIKEFFGTSQLSQFMDQNNPLSGLTHKRRLSALGPGGLSRERAGLEVRDVHPSHYGRMCPIETPEGPNIGLIGSLSVYARVNPFGFIETPYRKVEGGQVTDQVDYLTADEEDRHVVAQANSAVDANGHFTDDRILVRRKGGEVEFVSSAEIDYMDVSPRQMVSVATAMIPFLEHDDANRALMGANMQRQAVPLVRSEAPLVGTGMELRAAVDAGDVIVTEKTGVVEEVSADYVTVMADDGSRKTYRMRKFARSNQGTCANQRPIVDEGQRVESGQVLADGPCTENGEMALGKNLLVAIMPWEGHNYEDAIILSQRLVEEDVLTSIHIEEHEIDARDTKLGAEEITRDIPNVSDEVLADLDERGIIRIGAEVRDGDVLVGKVTPKGETELTPEERLLRAIFGEKAREVRDTSLKVPHGETGKVIGIRVFSRDDDDDLPPGVNELVRVYVAQKRKIQDGDKLAGRHGNKGVIGKILPQEDMPFLPDGTPIDIILNTHGVPRRMNIGQILETHLGWIGKTGWNVQIAGDGSRPDWAEQLPEEMLSAPSDSNIATPVFDGAKEDELTGLLGSTLPNRDGEVMVASDGKATLFDGRSGEPFPYPVSVGYMYIIKLHHLVDDKIHARSTGPYSMITQQPLGGKAQFGGQRFGEMECWAMQAYGAAYTLQELLTIKSDDVVGRVKVYEAIVKGENIPEPGIPESFKVLLKELQSLCLNVEVLSSDGAAIAMADGDDEDLERAAANLGINLSRNEAATVDDLAN.

Belongs to the RNA polymerase beta chain family. As to quaternary structure, the RNAP catalytic core consists of 2 alpha, 1 beta, 1 beta' and 1 omega subunit. When a sigma factor is associated with the core the holoenzyme is formed, which can initiate transcription.

The catalysed reaction is RNA(n) + a ribonucleoside 5'-triphosphate = RNA(n+1) + diphosphate. In terms of biological role, DNA-dependent RNA polymerase catalyzes the transcription of DNA into RNA using the four ribonucleoside triphosphates as substrates. The sequence is that of DNA-directed RNA polymerase subunit beta from Rhodococcus opacus (strain B4).